A 232-amino-acid chain; its full sequence is Ribose-5-phosphate isomerase A (232 aa).

Residues 28–31, 83–86, and 96–99 each bind substrate; these read TGST, DGAD, and KGGG. Residue E105 is the Proton acceptor of the active site. K123 contacts substrate.

The protein belongs to the ribose 5-phosphate isomerase family. In terms of assembly, homodimer.

It carries out the reaction aldehydo-D-ribose 5-phosphate = D-ribulose 5-phosphate. It functions in the pathway carbohydrate degradation; pentose phosphate pathway; D-ribose 5-phosphate from D-ribulose 5-phosphate (non-oxidative stage): step 1/1. Functionally, catalyzes the reversible conversion of ribose-5-phosphate to ribulose 5-phosphate. The sequence is that of Ribose-5-phosphate isomerase A from Rhodopseudomonas palustris (strain BisB18).